Consider the following 1093-residue polypeptide: ATP-dependent helicase/deoxyribonuclease subunit B (1093 aa).

The protein belongs to the helicase family. AddB/RexB type 2 subfamily. Heterodimer of AddA and RexB. The cofactor is Mg(2+).

In terms of biological role, the heterodimer acts as both an ATP-dependent DNA helicase and an ATP-dependent, dual-direction single-stranded exonuclease. Recognizes the chi site generating a DNA molecule suitable for the initiation of homologous recombination. This subunit has 5' -&gt; 3' nuclease activity but not helicase activity. This Streptococcus sanguinis (strain SK36) protein is ATP-dependent helicase/deoxyribonuclease subunit B.